Reading from the N-terminus, the 193-residue chain is uncharacterized protein (193 aa).

This is an uncharacterized protein from Methanocaldococcus jannaschii (strain ATCC 43067 / DSM 2661 / JAL-1 / JCM 10045 / NBRC 100440) (Methanococcus jannaschii).